A 483-amino-acid polypeptide reads, in one-letter code: Regulatory protein ViaA (483 aa).

This sequence belongs to the ViaA family. As to quaternary structure, homodimer. Interacts with RavA.

The protein localises to the cytoplasm. In terms of biological role, component of the RavA-ViaA chaperone complex, which may act on the membrane to optimize the function of some of the respiratory chains. ViaA stimulates the ATPase activity of RavA. This chain is Regulatory protein ViaA, found in Escherichia coli O1:K1 / APEC.